Reading from the N-terminus, the 275-residue chain is Small ribosomal subunit protein uS3 (275 aa).

Residues Ile-38–Lys-106 enclose the KH type-2 domain. Low complexity predominate over residues Asn-216–Gly-228. Residues Asn-216 to Ala-275 are disordered. Over residues Gly-229–Gly-244 the composition is skewed to basic and acidic residues. A compositionally biased stretch (low complexity) spans Pro-249–Ala-268.

Belongs to the universal ribosomal protein uS3 family. Part of the 30S ribosomal subunit. Forms a tight complex with proteins S10 and S14.

Its function is as follows. Binds the lower part of the 30S subunit head. Binds mRNA in the 70S ribosome, positioning it for translation. The sequence is that of Small ribosomal subunit protein uS3 from Streptomyces avermitilis (strain ATCC 31267 / DSM 46492 / JCM 5070 / NBRC 14893 / NCIMB 12804 / NRRL 8165 / MA-4680).